Consider the following 101-residue polypeptide: Osteocalcin (101 aa).

Residues 1-18 (MKLAIVLLLLGLAVLCLG) form the signal peptide. Residues 19 to 52 (GKDSQHSASAGDSRSSEAFISRQDSANFARRHKR) constitute a propeptide that is removed on maturation. One can recognise a Gla domain in the interval 53–99 (SYRYNVARGAAVTSPLESQREVCELNPDCDELADHIGFQEAYRRFYG). Ca(2+)-binding residues include Glu-69, Glu-73, Glu-76, and Asp-82. Glu-69, Glu-73, and Glu-76 each carry 4-carboxyglutamate. A disulfide bond links Cys-75 and Cys-81.

Belongs to the osteocalcin/matrix Gla protein family. In terms of processing, gamma-carboxyglutamate residues are formed by vitamin K dependent carboxylation by GGCX. These residues are essential for the binding of calcium.

It is found in the secreted. Functionally, the carboxylated form is one of the main organic components of the bone matrix, which constitutes 1-2% of the total bone protein. The carboxylated form binds strongly to apatite and calcium. This is Osteocalcin (bglap) from Xenopus tropicalis (Western clawed frog).